A 1068-amino-acid polypeptide reads, in one-letter code: tRNA wybutosine-synthesizing protein 4 (1068 aa).

The disordered stretch occupies residues 1-31 (MCPPEQPAKAMAPSKSNQAAKSAVPTKEEKS). S-adenosyl-L-methionine-binding positions include R81, G107, D134, 181–182 (DL), and E208. The region spanning 876–1024 (ADFPSLSSDF…ALGRDVYGNR (149 aa)) is the JmjC domain.

It belongs to the methyltransferase superfamily. LCMT family.

The catalysed reaction is 7-[(3S)-3-amino-3-carboxypropyl]wyosine(37) in tRNA(Phe) + S-adenosyl-L-methionine = 7-[(3S)-(3-amino-3-methoxycarbonyl)propyl]wyosine(37) in tRNA(Phe) + S-adenosyl-L-homocysteine. It catalyses the reaction 7-[(3S)-(3-amino-3-methoxycarbonyl)propyl]wyosine(37) in tRNA(Phe) + S-adenosyl-L-methionine + CO2 = wybutosine(37) in tRNA(Phe) + S-adenosyl-L-homocysteine + 2 H(+). It functions in the pathway tRNA modification; wybutosine-tRNA(Phe) biosynthesis. Functionally, probable S-adenosyl-L-methionine-dependent methyltransferase that acts as a component of the wybutosine biosynthesis pathway. Wybutosine is a hyper modified guanosine with a tricyclic base found at the 3'-position adjacent to the anticodon of eukaryotic phenylalanine tRNA. May methylate the carboxyl group of leucine residues to form alpha-leucine ester residues. The protein is tRNA wybutosine-synthesizing protein 4 (ppm2) of Emericella nidulans (strain FGSC A4 / ATCC 38163 / CBS 112.46 / NRRL 194 / M139) (Aspergillus nidulans).